The sequence spans 497 residues: Galactose-1-phosphate uridylyltransferase (497 aa).

It belongs to the galactose-1-phosphate uridylyltransferase type 2 family.

It is found in the cytoplasm. The catalysed reaction is alpha-D-galactose 1-phosphate + UDP-alpha-D-glucose = alpha-D-glucose 1-phosphate + UDP-alpha-D-galactose. It functions in the pathway carbohydrate metabolism; galactose metabolism. This is Galactose-1-phosphate uridylyltransferase from Enterococcus faecalis (strain ATCC 700802 / V583).